A 194-amino-acid polypeptide reads, in one-letter code: CASP-like protein 2C1 (194 aa).

Residues 1 to 18 (MSSYMEAAAAARAAEAKT) lie on the Cytoplasmic side of the membrane. The helical transmembrane segment at 19–39 (EGLLRGACALLAAAAALLVGL) threads the bilayer. Residues 40–59 (NTQTETVLFIRKKATVKDVQ) are Extracellular-facing. The chain crosses the membrane as a helical span at residues 60–80 (ALWVLAMAAAAAAGYHLLQLL). At 81–109 (RCFYLSRFADGKPCRHRRAIAWLCFLLDK) the chain is on the cytoplasmic side. A helical transmembrane segment spans residues 110–130 (GCAYITFATTVAAAQACVVAL). The Extracellular portion of the chain corresponds to 131–151 (YGTHALQWTKLCNIYTRFCEQ). The helical transmembrane segment at 152 to 172 (VAGSLVCAMLAAVGTALLSVV) threads the bilayer. Topologically, residues 173–194 (SARNLFRLYPSMLSPPPSSFVG) are cytoplasmic.

This sequence belongs to the Casparian strip membrane proteins (CASP) family. Homodimer and heterodimers.

The protein resides in the cell membrane. The polypeptide is CASP-like protein 2C1 (Oryza sativa subsp. japonica (Rice)).